We begin with the raw amino-acid sequence, 93 residues long: Protein Tat (93 aa).

Residues 1-24 (MEPVDPELEPWNHPGSQPKTACNN) form an interaction with human CREBBP region. The interval 1–48 (MEPVDPELEPWNHPGSQPKTACNNCHCKVCCYHCVYCFTKKGLGISYG) is transactivation. Zn(2+) is bound by residues cysteine 22, cysteine 25, and cysteine 27. Positions 22 to 37 (CNNCHCKVCCYHCVYC) are cysteine-rich. At lysine 28 the chain carries N6-acetyllysine; by host PCAF. Zn(2+) is bound by residues cysteine 30, histidine 33, cysteine 34, and cysteine 37. The core stretch occupies residues 38–48 (FTKKGLGISYG). A compositionally biased stretch (basic residues) spans 48–58 (GRKKRSQRRRT). Positions 48-93 (GRKKRSQRRRTPQSNKSHQDPLPKQPLSQRLGDQTGQKEQKKTLES) are disordered. Positions 49 to 57 (RKKRSQRRR) match the Nuclear localization signal, RNA-binding (TAR), and protein transduction motif. Residues 49-86 (RKKRSQRRRTPQSNKSHQDPLPKQPLSQRLGDQTGQKE) form an interaction with the host capping enzyme RNGTT region. An N6-acetyllysine; by host EP300 and GCN5L2 mark is found at lysine 50 and lysine 51. Arginine 52 carries the post-translational modification Asymmetric dimethylarginine; by host PRMT6. A Glycyl lysine isopeptide (Lys-Gly) (interchain with G-Cter in ubiquitin) cross-link involves residue lysine 71. Over residues 73–82 (PLSQRLGDQT) the composition is skewed to polar residues. Positions 83–93 (GQKEQKKTLES) are enriched in basic and acidic residues.

This sequence belongs to the lentiviruses Tat family. In terms of assembly, interacts with host CCNT1. Associates with the P-TEFb complex composed at least of Tat, P-TEFb (CDK9 and CCNT1), TAR RNA, RNA Pol II. Recruits the HATs CREBBP, TAF1/TFIID, EP300, PCAF and GCN5L2. Interacts with host KAT5/Tip60; this interaction targets the latter to degradation. Interacts with the host deacetylase SIRT1. Interacts with host capping enzyme RNGTT; this interaction stimulates RNGTT. Binds to host KDR, and to the host integrins ITGAV/ITGB3 and ITGA5/ITGB1. Interacts with host KPNB1/importin beta-1 without previous binding to KPNA1/importin alpha-1. Interacts with EIF2AK2. Interacts with host nucleosome assembly protein NAP1L1; this interaction may be required for the transport of Tat within the nucleus, since the two proteins interact at the nuclear rim. Interacts with host C1QBP/SF2P32; this interaction involves lysine-acetylated Tat. Interacts with the host chemokine receptors CCR2, CCR3 and CXCR4. Interacts with host DPP4/CD26; this interaction may trigger an anti-proliferative effect. Interacts with host LDLR. Interacts with the host extracellular matrix metalloproteinase MMP1. Interacts with host PRMT6; this interaction mediates Tat's methylation. Interacts with, and is ubiquitinated by MDM2/Hdm2. Interacts with host PSMC3 and HTATIP2. Interacts with STAB1; this interaction may overcome SATB1-mediated repression of IL2 and IL2RA (interleukin) in T cells by binding to the same domain than HDAC1. Interacts (when acetylated) with human CDK13, thereby increasing HIV-1 mRNA splicing and promoting the production of the doubly spliced HIV-1 protein Nef. Interacts with host TBP; this interaction modulates the activity of transcriptional pre-initiation complex. Interacts with host RELA. Post-translationally, asymmetrical arginine methylation by host PRMT6 seems to diminish the transactivation capacity of Tat and affects the interaction with host CCNT1. In terms of processing, acetylation by EP300, CREBBP, GCN5L2/GCN5 and PCAF regulates the transactivation activity of Tat. EP300-mediated acetylation of Lys-50 promotes dissociation of Tat from the TAR RNA through the competitive binding to PCAF's bromodomain. In addition, the non-acetylated Tat's N-terminus can also interact with PCAF. PCAF-mediated acetylation of Lys-28 enhances Tat's binding to CCNT1. Lys-50 is deacetylated by SIRT1. Polyubiquitination by host MDM2 does not target Tat to degradation, but activates its transactivation function and fosters interaction with CCNT1 and TAR RNA. Post-translationally, phosphorylated by EIF2AK2 on serine and threonine residues adjacent to the basic region important for TAR RNA binding and function. Phosphorylation of Tat by EIF2AK2 is dependent on the prior activation of EIF2AK2 by dsRNA.

It localises to the host nucleus. Its subcellular location is the host nucleolus. It is found in the host cytoplasm. The protein resides in the secreted. In terms of biological role, transcriptional activator that increases RNA Pol II processivity, thereby increasing the level of full-length viral transcripts. Recognizes a hairpin structure at the 5'-LTR of the nascent viral mRNAs referred to as the transactivation responsive RNA element (TAR) and recruits the cyclin T1-CDK9 complex (P-TEFb complex) that will in turn hyperphosphorylate the RNA polymerase II to allow efficient elongation. The CDK9 component of P-TEFb and other Tat-activated kinases hyperphosphorylate the C-terminus of RNA Pol II that becomes stabilized and much more processive. Other factors such as HTATSF1/Tat-SF1, SUPT5H/SPT5, and HTATIP2 are also important for Tat's function. Besides its effect on RNA Pol II processivity, Tat induces chromatin remodeling of proviral genes by recruiting the histone acetyltransferases (HATs) CREBBP, EP300 and PCAF to the chromatin. This also contributes to the increase in proviral transcription rate, especially when the provirus integrates in transcriptionally silent region of the host genome. To ensure maximal activation of the LTR, Tat mediates nuclear translocation of NF-kappa-B by interacting with host RELA. Through its interaction with host TBP, Tat may also modulate transcription initiation. Tat can reactivate a latently infected cell by penetrating in it and transactivating its LTR promoter. In the cytoplasm, Tat is thought to act as a translational activator of HIV-1 mRNAs. Extracellular circulating Tat can be endocytosed by surrounding uninfected cells via the binding to several surface receptors such as CD26, CXCR4, heparan sulfate proteoglycans (HSPG) or LDLR. Neurons are rarely infected, but they internalize Tat via their LDLR. Through its interaction with nuclear HATs, Tat is potentially able to control the acetylation-dependent cellular gene expression. Modulates the expression of many cellular genes involved in cell survival, proliferation or in coding for cytokines or cytokine receptors. Tat plays a role in T-cell and neurons apoptosis. Tat induced neurotoxicity and apoptosis probably contribute to neuroAIDS. Circulating Tat also acts as a chemokine-like and/or growth factor-like molecule that binds to specific receptors on the surface of the cells, affecting many cellular pathways. In the vascular system, Tat binds to ITGAV/ITGB3 and ITGA5/ITGB1 integrins dimers at the surface of endothelial cells and competes with bFGF for heparin-binding sites, leading to an excess of soluble bFGF. The chain is Protein Tat from Pan troglodytes (Chimpanzee).